A 400-amino-acid chain; its full sequence is MSKLILAINAGSSSLKFQLIRMPEEELVTKGLVERIGLKDSIFTIEVNGEKVKTVQDIKDHVEAVDIMLDAFKAHNIINDINDIDGTGHRVVHGGEKFPESVAITDEVEKEIEELSELAPLHNPANLMGIRAFRKLLPNIPHVAIFDTAFHQTMPEKAYLYSLPYHYYKDYGIRKYGFHGTSHKFVSQRAAEMLDKPIEDLRIISCHIGNGASIAAIDGGKSIDTSMGFTPLAGVTMGTRSGNIDPALIPFIMEKTGKTAEQVLEILNKESGLLGLSGTSSDLRDLSEEAESGKARSQMALDVFASKIHKYIGSYAARMHGVDVIVFTAGIGENSVEIRAKVLEGLEFMGVYWDPKKNENLLRGKEGFINYPHSPVKVVVIPTDEESMIARDVMTFGGLK.

Asn9 lines the Mg(2+) pocket. Lys16 provides a ligand contact to ATP. Position 90 (Arg90) interacts with substrate. Asp147 acts as the Proton donor/acceptor in catalysis. Residues His207–Gly211, Asp282–Arg284, and Gly330–Asn334 each bind ATP. A Mg(2+)-binding site is contributed by Glu385.

Belongs to the acetokinase family. As to quaternary structure, homodimer. It depends on Mg(2+) as a cofactor. Mn(2+) is required as a cofactor.

It localises to the cytoplasm. The catalysed reaction is acetate + ATP = acetyl phosphate + ADP. It participates in metabolic intermediate biosynthesis; acetyl-CoA biosynthesis; acetyl-CoA from acetate: step 1/2. In terms of biological role, catalyzes the formation of acetyl phosphate from acetate and ATP. Can also catalyze the reverse reaction. In Staphylococcus aureus (strain USA300), this protein is Acetate kinase.